The chain runs to 731 residues: EF-hand calcium-binding domain-containing protein 4B (731 aa).

A disordered region spans residues 1–45; it reads MAAPDGRVVSRPQRLGQGSGQGPKGSGACLHPLDSLEQKETQEQT. The 36-residue stretch at 84 to 119 folds into the EF-hand domain; that stretch reads LSLEELEDVFDALDADGNGYLTPQEFTTGFSHFFFS. Residues aspartate 97, aspartate 99, asparagine 101, tyrosine 103, and glutamate 108 each coordinate Ca(2+). Residues 201–382 are a coiled coil; sequence LTRIISQLQE…RERNKHLRDE (182 aa). Residues 349 to 540 are proline-rich domain (PRD) which mediates interaction with VAV1; that stretch reads MEVYRVTESL…ALCKEESSPS (192 aa). Disordered stretches follow at residues 426–466 and 494–528; these read SEEE…PYPR and CSEE…QPVG. The GTP site is built by serine 554, valine 556, glycine 557, lysine 558, threonine 559, serine 560, serine 571, proline 572, and threonine 577. Residue threonine 559 participates in Mg(2+) binding. The switch-I stretch occupies residues 572-580; that stretch reads PGMAATVGI. Residues threonine 577 and aspartate 600 each contribute to the Mg(2+) site. Residues glycine 603, asparagine 658, lysine 659, aspartate 661, and alanine 689 each coordinate GTP. The switch-II stretch occupies residues 603–619; sequence GQERYRCITQQFFRKAD. Cysteine 729 carries S-geranylgeranyl cysteine lipidation.

Belongs to the EFCAB4 family. Interacts with ORAI1 and STIM1; the interaction is direct and takes place in absence of Ca(2+). Forms a complex with ORAI1 and STIM1 at low concentration of Ca(2+), the complex dissociates at elevated Ca(2+) concentrations. Interacts with ORAI2 and ORAI3. In terms of assembly, interacts with DYNC1H1. Interacts with the dynein-dynactin complex in a Ca(2+)-dependent manner. Interacts with VAV1. It depends on Mg(2+) as a cofactor. Expressed in the Jurkat T-cell line. In terms of tissue distribution, expressed in endothelial cells. Expressed in Weibel-Palade bodies (which are P-selectin/SELP negative) in endothelial cells. Expressed in the Jurkat T-cell line.

It is found in the cytoplasm. The protein resides in the cytoskeleton. Its subcellular location is the microtubule organizing center. The protein localises to the cell membrane. It localises to the golgi apparatus membrane. It is found in the golgi apparatus. The protein resides in the trans-Golgi network membrane. Its subcellular location is the vesicle. It catalyses the reaction GTP + H2O = GDP + phosphate + H(+). Its function is as follows. Ca(2+)-binding protein that plays a key role in store-operated Ca(2+) entry (SOCE) in T-cells by regulating CRAC channel activation. Acts as a cytoplasmic calcium-sensor that facilitates the clustering of ORAI1 and STIM1 at the junctional regions between the plasma membrane and the endoplasmic reticulum upon low Ca(2+) concentration. It thereby regulates CRAC channel activation, including translocation and clustering of ORAI1 and STIM1. Upon increase of cytoplasmic Ca(2+) resulting from opening of CRAC channels, dissociates from ORAI1 and STIM1, thereby destabilizing the ORAI1-STIM1 complex. In terms of biological role, rab GTPase that mediates the trafficking of Weibel-Palade bodies (WPBs) to microtubule organizing center (MTOC) in endothelial cells in response to acute inflammatory stimuli. During histamine (but not thrombin) stimulation of endothelial cells, the dynein-bound form induces retrograde transport of a subset of WPBs along microtubules to the MTOC in a Ca(2+)-independent manner and its GTPase activity is essential for this function. Ca(2+)-regulated dynein adapter protein that activates dynein-mediated transport and dynein-dynactin motility on microtubules and regulates endosomal trafficking of CD47. Acts as an intracellular signaling module bridging two important T-cell receptor (TCR) signaling pathways, Ca(2+)-NFAT and JNK, to affect T-cell activation. In resting T-cells, is predominantly localized near TGN network in a GTP-bound form, upon TCR stimulation, localizes at the immunological synapse via interaction with VAV1 to activate downstream Ca(2+)-NFAT and JNK signaling pathways. Plays a role in T-helper 1 (Th1) cell differentiation and T-helper 17 (Th17) cell effector function. Plays a role in store-operated Ca(2+) entry (SOCE) in T-cells by regulating CRAC channel activation. This Homo sapiens (Human) protein is EF-hand calcium-binding domain-containing protein 4B.